The primary structure comprises 155 residues: MLP-like protein 423 (155 aa).

This sequence belongs to the MLP family.

The chain is MLP-like protein 423 (MLP423) from Arabidopsis thaliana (Mouse-ear cress).